The following is a 248-amino-acid chain: UPF0246 protein FN1762 (248 aa).

It belongs to the UPF0246 family.

The chain is UPF0246 protein FN1762 from Fusobacterium nucleatum subsp. nucleatum (strain ATCC 25586 / DSM 15643 / BCRC 10681 / CIP 101130 / JCM 8532 / KCTC 2640 / LMG 13131 / VPI 4355).